Here is a 627-residue protein sequence, read N- to C-terminus: 1-deoxy-D-xylulose-5-phosphate synthase (627 aa).

Thiamine diphosphate-binding positions include His75 and 116–118 (AHS). Position 147 (Asp147) interacts with Mg(2+). Thiamine diphosphate contacts are provided by residues 148–149 (GA), Asn177, Tyr284, and Glu366. Asn177 contacts Mg(2+).

This sequence belongs to the transketolase family. DXPS subfamily. Homodimer. Mg(2+) serves as cofactor. Thiamine diphosphate is required as a cofactor.

The enzyme catalyses D-glyceraldehyde 3-phosphate + pyruvate + H(+) = 1-deoxy-D-xylulose 5-phosphate + CO2. It participates in metabolic intermediate biosynthesis; 1-deoxy-D-xylulose 5-phosphate biosynthesis; 1-deoxy-D-xylulose 5-phosphate from D-glyceraldehyde 3-phosphate and pyruvate: step 1/1. Catalyzes the acyloin condensation reaction between C atoms 2 and 3 of pyruvate and glyceraldehyde 3-phosphate to yield 1-deoxy-D-xylulose-5-phosphate (DXP). The polypeptide is 1-deoxy-D-xylulose-5-phosphate synthase (Bordetella petrii (strain ATCC BAA-461 / DSM 12804 / CCUG 43448)).